The sequence spans 474 residues: MSNPLLSLNYEPAIQALGGDYYDEVLSAEFPQHILRFRNDQLLPKIGLNSQDVKDEHFIEAFGKFHCVRPFLALRYHGYQFGEYNPYLGDGRGFLYGQVRGVDDELYDFGTKGSGRTPYSRSADGRLTLKGGVREVLAAEILHRHGVRTSRCLSLIETGEGLWRGDEPSPTRSSVMVRFSRSHIRFGTFERLHFYKRPDLTKKLLNHVINCYYSNLKKENISQKDPFQDCYFLFYLELVKRIAKLVAQWMAAGFCHGVLNTDNMSITGESFDYGPYSFIPTYNPKFTAAYFDYSGLYRYSHQPLVCKSNLQLLQEALAAVIDRKNMRSALEKFDDFYLHEYRQLMMRRLGFKKLAEADADKLLQLTIKMLTDSQVGYHDFFLELRQKFSPEWRDDISQIFADFEQPELIDPWRQYYYHLLQTYSDNELEEMTERLQQYNPQQSLIRPVIESVWEAITLEDNWQPFYDLLQQIYD.

ATP is bound by residues Gly-89, Gly-91, Arg-92, Lys-112, Asp-124, Gly-125, Arg-178, and Arg-185. The Proton acceptor role is filled by Asp-262. Mg(2+) contacts are provided by Asn-263 and Asp-272. Asp-272 provides a ligand contact to ATP.

Belongs to the SELO family. Requires Mg(2+) as cofactor. The cofactor is Mn(2+).

It carries out the reaction L-seryl-[protein] + ATP = 3-O-(5'-adenylyl)-L-seryl-[protein] + diphosphate. The enzyme catalyses L-threonyl-[protein] + ATP = 3-O-(5'-adenylyl)-L-threonyl-[protein] + diphosphate. It catalyses the reaction L-tyrosyl-[protein] + ATP = O-(5'-adenylyl)-L-tyrosyl-[protein] + diphosphate. The catalysed reaction is L-histidyl-[protein] + UTP = N(tele)-(5'-uridylyl)-L-histidyl-[protein] + diphosphate. It carries out the reaction L-seryl-[protein] + UTP = O-(5'-uridylyl)-L-seryl-[protein] + diphosphate. The enzyme catalyses L-tyrosyl-[protein] + UTP = O-(5'-uridylyl)-L-tyrosyl-[protein] + diphosphate. In terms of biological role, nucleotidyltransferase involved in the post-translational modification of proteins. It can catalyze the addition of adenosine monophosphate (AMP) or uridine monophosphate (UMP) to a protein, resulting in modifications known as AMPylation and UMPylation. The protein is Protein nucleotidyltransferase YdiU of Trichodesmium erythraeum (strain IMS101).